Consider the following 757-residue polypeptide: Protein lsd90 (757 aa).

Polar residues-rich tracts occupy residues 1–11, 19–36, 51–69, and 94–118; these read MVGTINESMQN, TAQS…SSSK, TAGN…SKNL, and DTSN…STYE. 4 disordered regions span residues 1–131, 224–244, 589–633, and 657–757; these read MVGT…SRSS, ERAR…EKQA, AQAE…KSKS, and AYVG…MSNK. Residues 166 to 604 are a coiled coil; it reads DEKTLQDLLE…KVESEYNSVK (439 aa). A compositionally biased stretch (basic and acidic residues) spans 589 to 598; that stretch reads AQAEQSKVES. Positions 619-632 are enriched in polar residues; that stretch reads VTTNEPTDVSTKSK. The span at 674-693 shows a compositional bias: low complexity; the sequence is STPSTLPTSASTNAAATTTT. 718–725 is an ATP binding site; sequence GTTGLGKS.

Functionally, may be involved in the metabolism of very long-chain fatty acid-containing phospholipids (VLCFA-PL). The polypeptide is Protein lsd90 (lsd90) (Schizosaccharomyces pombe (strain 972 / ATCC 24843) (Fission yeast)).